A 94-amino-acid chain; its full sequence is Small ribosomal subunit protein bS18 (94 aa).

This sequence belongs to the bacterial ribosomal protein bS18 family. As to quaternary structure, part of the 30S ribosomal subunit. Forms a tight heterodimer with protein bS6.

Binds as a heterodimer with protein bS6 to the central domain of the 16S rRNA, where it helps stabilize the platform of the 30S subunit. In Leptothrix cholodnii (strain ATCC 51168 / LMG 8142 / SP-6) (Leptothrix discophora (strain SP-6)), this protein is Small ribosomal subunit protein bS18.